The sequence spans 114 residues: V-type proton ATPase subunit G (114 aa).

Ser2 is subject to N-acetylserine.

Belongs to the V-ATPase G subunit family. V-ATPase is a heteromultimeric enzyme composed of a peripheral catalytic V1 complex (components A to H) attached to an integral membrane V0 proton pore complex (components: a, c, c', c'', d, e, f and VOA1).

It localises to the vacuole membrane. Its function is as follows. Subunit of the V1 complex of vacuolar(H+)-ATPase (V-ATPase), a multisubunit enzyme composed of a peripheral complex (V1) that hydrolyzes ATP and a membrane integral complex (V0) that translocates protons. V-ATPase is responsible for acidifying and maintaining the pH of intracellular compartments. This Saccharomyces cerevisiae (strain ATCC 204508 / S288c) (Baker's yeast) protein is V-type proton ATPase subunit G.